The chain runs to 347 residues: 4-hydroxy-2-oxovalerate aldolase 1 (347 aa).

The Pyruvate carboxyltransferase domain maps to 8–261 (VTLYDMSLLX…ETGIDLYKIM (254 aa)). The Proton acceptor role is filled by His20. Substrate is bound by residues Ser171 and His200. The Mn(2+) site is built by His200 and His202. Position 291 (Tyr291) interacts with substrate.

This sequence belongs to the 4-hydroxy-2-oxovalerate aldolase family.

The catalysed reaction is (S)-4-hydroxy-2-oxopentanoate = acetaldehyde + pyruvate. The chain is 4-hydroxy-2-oxovalerate aldolase 1 (salH) from Metapseudomonas furukawaii (Pseudomonas furukawaii).